The sequence spans 226 residues: ATP synthase subunit a (226 aa).

5 helical membrane passes run 17–37, 79–99, 105–125, 168–188, and 200–222; these read FNYL…AKLA, LVAT…IPGF, SLNL…FEGI, FGNI…APWV, and MALL…AVVV.

The protein belongs to the ATPase A chain family. As to quaternary structure, F-type ATPases have 2 components, CF(1) - the catalytic core - and CF(0) - the membrane proton channel. CF(1) has five subunits: alpha(3), beta(3), gamma(1), delta(1), epsilon(1). CF(0) has three main subunits: a(1), b(2) and c(9-12). The alpha and beta chains form an alternating ring which encloses part of the gamma chain. CF(1) is attached to CF(0) by a central stalk formed by the gamma and epsilon chains, while a peripheral stalk is formed by the delta and b chains.

It localises to the cell inner membrane. In terms of biological role, key component of the proton channel; it plays a direct role in the translocation of protons across the membrane. The polypeptide is ATP synthase subunit a (Campylobacter fetus subsp. fetus (strain 82-40)).